The chain runs to 236 residues: Biosynthetic peptidoglycan transglycosylase (236 aa).

A helical transmembrane segment spans residues 12–31; sequence ALLWFAAGSALVVLVLRWVP.

This sequence belongs to the glycosyltransferase 51 family.

It is found in the cell inner membrane. It carries out the reaction [GlcNAc-(1-&gt;4)-Mur2Ac(oyl-L-Ala-gamma-D-Glu-L-Lys-D-Ala-D-Ala)](n)-di-trans,octa-cis-undecaprenyl diphosphate + beta-D-GlcNAc-(1-&gt;4)-Mur2Ac(oyl-L-Ala-gamma-D-Glu-L-Lys-D-Ala-D-Ala)-di-trans,octa-cis-undecaprenyl diphosphate = [GlcNAc-(1-&gt;4)-Mur2Ac(oyl-L-Ala-gamma-D-Glu-L-Lys-D-Ala-D-Ala)](n+1)-di-trans,octa-cis-undecaprenyl diphosphate + di-trans,octa-cis-undecaprenyl diphosphate + H(+). It participates in cell wall biogenesis; peptidoglycan biosynthesis. In terms of biological role, peptidoglycan polymerase that catalyzes glycan chain elongation from lipid-linked precursors. The sequence is that of Biosynthetic peptidoglycan transglycosylase from Pseudomonas syringae pv. tomato (strain ATCC BAA-871 / DC3000).